We begin with the raw amino-acid sequence, 162 residues long: Transcription elongation factor GreA (162 aa).

Residues 45-74 (ENAEYEAAREKQAFIEGRIKELEDMTARAE) are a coiled coil.

Belongs to the GreA/GreB family.

Functionally, necessary for efficient RNA polymerase transcription elongation past template-encoded arresting sites. The arresting sites in DNA have the property of trapping a certain fraction of elongating RNA polymerases that pass through, resulting in locked ternary complexes. Cleavage of the nascent transcript by cleavage factors such as GreA or GreB allows the resumption of elongation from the new 3'terminus. GreA releases sequences of 2 to 3 nucleotides. This chain is Transcription elongation factor GreA, found in Rickettsia typhi (strain ATCC VR-144 / Wilmington).